Reading from the N-terminus, the 299-residue chain is MSNDIDLIKRLDPSAMDQIMLYLAFSAMRTSGHRHGAFLDAAATAAKCAIYMTYLEQGQNLRMTGHLHHLEPKRVKIIVEEVRQALTEGKLLKMLGSQEPRYLIQLPYVWLEKYPWQPGRSRVPGTSLTSEEKRQIEQKLPSNLPDAQLVSSFEFLDLIEFLHRRSQEDLPTEHQMPLSEALGEHIKRRLLYSGTVTRIDSPWGMPFYALTRPFYAPADDQERTYIMVEDTARYFRMMKNWAERRRNAMRLLEELDILPEKMEQAMEELDEIIRAWADKYHQDGGIAVVLQTVFGEKED.

Ser-152 is an active-site residue.

It belongs to the peptidase S48 family. In terms of assembly, homodimer; disulfide-linked.

In terms of biological role, controls heterocyst differentiation. Dimerization is required for DNA-binding. Has both a protease and a DNA-binding activity. Increased expression leads to more heterocysts than usual. The sequence is that of DNA-binding transcriptional activator HetR from Nostoc punctiforme (strain ATCC 29133 / PCC 73102).